Consider the following 134-residue polypeptide: Putative nickel-responsive regulator (134 aa).

4 residues coordinate Ni(2+): His-78, His-89, His-91, and Cys-97.

This sequence belongs to the transcriptional regulatory CopG/NikR family. It depends on Ni(2+) as a cofactor.

Transcriptional regulator. In Chlorobaculum tepidum (strain ATCC 49652 / DSM 12025 / NBRC 103806 / TLS) (Chlorobium tepidum), this protein is Putative nickel-responsive regulator.